The following is a 580-amino-acid chain: Mucolipin-1 (580 aa).

A disordered region spans residues 1–38 (MATPAGRRASETERLLTPNPGYGTQVGTSPAPTTPTEE). Over 1 to 65 (MATPAGRRAS…FRAKGRKPCK (65 aa)) the chain is Cytoplasmic. Position 10 is a phosphoserine (Ser-10). Positions 11–16 (ETERLL) match the Dileucine motif; mediates targeting to lysosomes motif. The interval 42 to 62 (RRRLKYFFMSPCDKFRAKGRK) is interaction with phosphoinositides. A helical membrane pass occupies residues 66–86 (LMLQVVKILVVTVQLILFGLS). The Extracellular portion of the chain corresponds to 87–298 (NQLVVTFREE…VSRHGDNSFR (212 aa)). An extracellular/lumenal pore loop region spans residues 107 to 121 (LGYSDGSDDTFAAYT). An intrachain disulfide couples Cys-166 to Cys-192. 2 N-linked (GlcNAc...) asparagine glycosylation sites follow: Asn-220 and Asn-230. A disulfide bridge links Cys-253 with Cys-284. The helical transmembrane segment at 299–321 (LLFDVVVILTCSLSFLLCARSLL) threads the bilayer. The Cytoplasmic portion of the chain corresponds to 322–350 (RGFLLQNEFVVFMWRRRGREISLWERLEF). The chain crosses the membrane as a helical span at residues 351 to 371 (VNGWYILLVTSDVLTISGTVM). Residues 372-382 (KIGIEAKNLAS) lie on the Extracellular side of the membrane. Residues 383-405 (YDVCSILLGTSTLLVWVGVIRYL) traverse the membrane as a helical segment. Residues 406 to 427 (TFFHKYNILIATLRVALPSVMR) lie on the Cytoplasmic side of the membrane. The chain crosses the membrane as a helical span at residues 428–448 (FCCCVAVIYLGYCFCGWIVLG). Residues 449-456 (PYHVKFRS) are Extracellular-facing. Residues 457 to 477 (LSMVSECLFSLINGDDMFVTF) constitute an intramembrane region (pore-forming). The Selectivity filter motif lies at 469–474 (NGDDMF). Topologically, residues 478–491 (AAMQAQQGHSSLVW) are extracellular. A helical transmembrane segment spans residues 492–513 (LFSQLYLYSFISLFIYMVLSLF). Over 514–580 (IALITGAYDT…SPEDHSLLVN (67 aa)) the chain is Cytoplasmic. Ser-557 carries the phosphoserine modification. A Phosphoserine; by PAK modification is found at Ser-559. Positions 565–567 (CCC) are required for palmitoylation and association with membranes. Residues 573–578 (EDHSLL) carry the Dileucine internalization motif; mediates AP2 complex-dependent internalization motif.

The protein belongs to the transient receptor (TC 1.A.4) family. Polycystin subfamily. MCOLN1 sub-subfamily. Homotetramer. Homooligomer. Can heterooligomerize with MCOLN2 or MCOLN3; heteromeric assemblies have different channel properties as compared to the respective homooligomers and may be tissue-specific. Interacts with PDCD6. Interacts with TMEM163. Interacts with LAPTM4B. Post-translationally, palmitoylated; involved in association with membranes. Phosphorylation by PKA inhibits channel activity. Dephosphorylation increases activity. In terms of processing, proteolytically cleaved probably involving multiple lysosomal proteases including cathepsin B; inhibits lysosomal channel activity. As to expression, widely expressed, with the highest expression in brain, liver and kidney.

It is found in the late endosome membrane. Its subcellular location is the lysosome membrane. The protein localises to the cytoplasmic vesicle membrane. It localises to the cell projection. The protein resides in the phagocytic cup. It is found in the cytoplasmic vesicle. Its subcellular location is the phagosome membrane. The protein localises to the cell membrane. It carries out the reaction Ca(2+)(in) = Ca(2+)(out). The catalysed reaction is Fe(2+)(in) = Fe(2+)(out). The enzyme catalyses Mg(2+)(in) = Mg(2+)(out). It catalyses the reaction K(+)(in) = K(+)(out). It carries out the reaction Na(+)(in) = Na(+)(out). Its activity is regulated as follows. Channel activity is controlled by multiple regulatory mechanisms in different subcellular compartments. Lower pH by itself has an inhibitory effect on channel conductance. Channel function is transiently modulated by changes in Ca(2+) in a pH-dependent manner; pH changes modify the aggregation state of unitary channels; a negative cooperativity between extracellular/lumenal Ca(2+) and H(+) is suggested. Fe(2+) channel activity is potentiated by low pH. Regulated by phosphoinositides in a compartment-specific manner: in lysosomes activated by PtdIns(3,5)P2 (Phosphatidylinositol 3,5-bisphosphate) and at the plasma membrane inhibited by PtdIns(4,5)P2 (Phosphatidylinositol 4,5-bisphosphate). Its function is as follows. Nonselective cation channel probably playing a role in the regulation of membrane trafficking events and of metal homeostasis. Acts as a Ca(2+)-permeable cation channel with inwardly rectifying activity. Proposed to play a major role in Ca(2+) release from late endosome and lysosome vesicles to the cytoplasm, which is important for many lysosome-dependent cellular events, including the fusion and trafficking of these organelles, exocytosis and autophagy. Required for efficient uptake of large particles in macrophages in which Ca(2+) release from the lysosomes triggers lysosomal exocytosis. May also play a role in phagosome-lysosome fusion. Involved in lactosylceramide trafficking indicative for a role in the regulation of late endocytic membrane fusion/fission events. By mediating lysosomal Ca(2+) release is involved in regulation of mTORC1 signaling and in mTOR/TFEB-dependent lysosomal adaptation to environmental cues such as nutrient levels. Seems to act as lysosomal active oxygen species (ROS) sensor involved in ROS-induced TFEB activation and autophagy. Also functions as a Fe(2+) permeable channel in late endosomes and lysosomes. Also permeable to Mg(2+), Na(+). K(+) and Cs(+). Proposed to play a role in zinc homeostasis probably implicating its association with TMEM163. In adaptive immunity, TRPML2 and TRPML1 may play redundant roles in the function of the specialized lysosomes of B cells. Functionally, may contribute to cellular lipase activity within the late endosomal pathway or at the cell surface which may be involved in processes of membrane reshaping and vesiculation, especially the growth of tubular structures. However, it is not known, whether it conveys the enzymatic activity directly, or merely facilitates the activity of an associated phospholipase. This chain is Mucolipin-1, found in Mus musculus (Mouse).